A 79-amino-acid chain; its full sequence is Apolipoprotein C-II (79 aa).

A signal peptide spans 1 to 21; the sequence is MDLKVVAVSFLLLVLCSEAAG. Residues 45 to 52 are lipid binding; that stretch reads GVEKLRDI. The tract at residues 56–79 is lipoprotein lipase cofactor; the sequence is SVDAVGTYTSILTDQLYHWWCGEQ.

This sequence belongs to the apolipoprotein C2 family. Proapolipoprotein C-II is synthesized as a sialic acid containing glycoprotein which is subsequently desialylated prior to its proteolytic processing. In terms of processing, proapolipoprotein C-II, the major form found in plasma undergoes proteolytic cleavage of its N-terminal hexapeptide to generate apolipoprotein C-II, which occurs as the minor form in plasma.

The protein resides in the secreted. In terms of biological role, component of chylomicrons, very low-density lipoproteins (VLDL), low-density lipoproteins (LDL), and high-density lipoproteins (HDL) in plasma. Plays an important role in lipoprotein metabolism as an activator of lipoprotein lipase. Both proapolipoprotein C-II and apolipoprotein C-II can activate lipoprotein lipase. The protein is Apolipoprotein C-II (APOC2) of Alligator mississippiensis (American alligator).